The sequence spans 70 residues: DNA-directed RNA polymerase subunit omega (70 aa).

This sequence belongs to the RNA polymerase subunit omega family. In terms of assembly, the RNAP catalytic core consists of 2 alpha, 1 beta, 1 beta' and 1 omega subunit. When a sigma factor is associated with the core the holoenzyme is formed, which can initiate transcription.

The enzyme catalyses RNA(n) + a ribonucleoside 5'-triphosphate = RNA(n+1) + diphosphate. Its function is as follows. Promotes RNA polymerase assembly. Latches the N- and C-terminal regions of the beta' subunit thereby facilitating its interaction with the beta and alpha subunits. The polypeptide is DNA-directed RNA polymerase subunit omega (Methylobacillus flagellatus (strain ATCC 51484 / DSM 6875 / VKM B-1610 / KT)).